A 162-amino-acid chain; its full sequence is Crossover junction endodeoxyribonuclease RuvC (162 aa).

Catalysis depends on residues Asp8, Glu69, and His141. Mg(2+)-binding residues include Asp8, Glu69, and His141.

The protein belongs to the RuvC family. As to quaternary structure, homodimer which binds Holliday junction (HJ) DNA. The HJ becomes 2-fold symmetrical on binding to RuvC with unstacked arms; it has a different conformation from HJ DNA in complex with RuvA. In the full resolvosome a probable DNA-RuvA(4)-RuvB(12)-RuvC(2) complex forms which resolves the HJ. The cofactor is Mg(2+).

It localises to the cytoplasm. The catalysed reaction is Endonucleolytic cleavage at a junction such as a reciprocal single-stranded crossover between two homologous DNA duplexes (Holliday junction).. Its function is as follows. The RuvA-RuvB-RuvC complex processes Holliday junction (HJ) DNA during genetic recombination and DNA repair. Endonuclease that resolves HJ intermediates. Cleaves cruciform DNA by making single-stranded nicks across the HJ at symmetrical positions within the homologous arms, yielding a 5'-phosphate and a 3'-hydroxyl group; requires a central core of homology in the junction. The consensus cleavage sequence is 5'-(A/T)TT(C/G)-3'. Cleavage occurs on the 3'-side of the TT dinucleotide at the point of strand exchange. HJ branch migration catalyzed by RuvA-RuvB allows RuvC to scan DNA until it finds its consensus sequence, where it cleaves and resolves the cruciform DNA. The polypeptide is Crossover junction endodeoxyribonuclease RuvC (Wolbachia pipientis wMel).